Consider the following 78-residue polypeptide: Conotoxin 5 (78 aa).

A signal peptide spans 1–22 (MKLTCMMIVTVLFLTAWIFITA). A propeptide spanning residues 23-49 (DNSRNGIENLPRMRRHEMKNPKASKLN) is cleaved from the precursor. Cystine bridges form between C53-C69, C60-C73, and C68-C77.

This sequence belongs to the conotoxin O1 superfamily. Expressed by the venom duct.

It is found in the secreted. The sequence is that of Conotoxin 5 from Conus imperialis (Imperial cone).